The sequence spans 414 residues: Na(+)-translocating NADH-quinone reductase subunit B (414 aa).

4 consecutive transmembrane segments (helical) span residues isoleucine 56–glycine 76, alanine 82–leucine 104, phenylalanine 129–methionine 149, and isoleucine 164–threonine 184. Threonine 236 is subject to FMN phosphoryl threonine. The next 5 membrane-spanning stretches (helical) occupy residues valine 275 to tryptophan 295, isoleucine 297 to serine 317, methionine 325 to threonine 345, tryptophan 358 to tyrosine 378, and glycine 381 to isoleucine 401.

Belongs to the NqrB/RnfD family. In terms of assembly, composed of six subunits; NqrA, NqrB, NqrC, NqrD, NqrE and NqrF. Requires FMN as cofactor.

It localises to the cell inner membrane. It catalyses the reaction a ubiquinone + n Na(+)(in) + NADH + H(+) = a ubiquinol + n Na(+)(out) + NAD(+). Its function is as follows. NQR complex catalyzes the reduction of ubiquinone-1 to ubiquinol by two successive reactions, coupled with the transport of Na(+) ions from the cytoplasm to the periplasm. NqrA to NqrE are probably involved in the second step, the conversion of ubisemiquinone to ubiquinol. This is Na(+)-translocating NADH-quinone reductase subunit B from Vibrio anguillarum (Listonella anguillarum).